The chain runs to 448 residues: MSDNVPTIAAVATAPGRGGVGVIRISGKNLLPMAEALCGKTPKPRVATYADFTDADGQAIDSGLLLFFAAPASFTGEDVIELQGHGGPVVMDMLLNRCLELGARLAEPGEFTKRAFLNDKLDLAQAEGVADLIDASSRSAARLALRSLKGDFSRRIHGLVEDLITLRMLVEATLDFPEEDIDFLEAADARGKLDGLRRAVDDVLANAQQGAILREGLNVVLVGAPNVGKSSLLNALAGDEVAIVTDIAGTTRDAVRERILIDGVPVHIVDTAGLRETDDVVERIGIERSRKAVSEADVALVLVDPREGVNDKTRAILDALPPELKRIEIHSKSDLHAHAAGGFGTGAETVIALSAKTGDGLDALKRTLLREAGWQGEGEGLFLARTRHVNALKAAQEELSLAALCGNHQIELFAEHLRLAQVACGEITGEFTADDLLGVIFSRFCIGK.

Arg24, Glu81, and Lys120 together coordinate (6S)-5-formyl-5,6,7,8-tetrahydrofolate. In terms of domain architecture, TrmE-type G spans 216 to 373 (GLNVVLVGAP…LKRTLLREAG (158 aa)). A K(+)-binding site is contributed by Asn226. Residues 226–231 (NVGKSS), 245–251 (TDIAGTT), and 270–273 (DTAG) contribute to the GTP site. Ser230 serves as a coordination point for Mg(2+). Residues Thr245, Ile247, and Thr250 each contribute to the K(+) site. Thr251 is a binding site for Mg(2+). Residue Lys448 coordinates (6S)-5-formyl-5,6,7,8-tetrahydrofolate.

The protein belongs to the TRAFAC class TrmE-Era-EngA-EngB-Septin-like GTPase superfamily. TrmE GTPase family. Homodimer. Heterotetramer of two MnmE and two MnmG subunits. K(+) serves as cofactor.

It is found in the cytoplasm. Functionally, exhibits a very high intrinsic GTPase hydrolysis rate. Involved in the addition of a carboxymethylaminomethyl (cmnm) group at the wobble position (U34) of certain tRNAs, forming tRNA-cmnm(5)s(2)U34. The protein is tRNA modification GTPase MnmE of Neisseria meningitidis serogroup C / serotype 2a (strain ATCC 700532 / DSM 15464 / FAM18).